The following is a 2325-amino-acid chain: MGNQRNRVNLNPFRFWVFELREILREIKNSRYPFNSVGSFIHIFVHQERFLKLLDPRIWSVLRSQGSTGVVLFLVAVLIYRINNRNMIERKNIYLTGLLPIPTNFAGPRNETLEESFLSSNINRLIVSLLHLPKGKRLSESCFLDPKESTRVLPITKWRNWIGKRRDSSQLKGSSDQSRDHFDSIGTEDSEYHTLINQREIQQRKERSSLLDPSFLQTERTEIESDRFSKGLSGSSSKSRLFTEGEKEMNNHLPPEEIEEFLGNPTRSILSFFSDEWSELHLGSNPTERSTVDQKLLKKEQEVSFAPFRRSETKEIVNLFKTMAYLQKTVSIHPISSDPGCDMVPKDELDSEERFQEMADLFTLSITEPDLVYHKGFAFSIDSSVLDQKQFLAEARDESKKKSLLVLPPVFYQENESFYRRIRKRGVQISCGNDLEDPKPKIVVFASNNIVEAVNQYRWIRNLIQIQYSTHGYIRNVLNRFFLMNRSDRNFEYGIQRDQIGNDTLNHRTFMKYTINQHLSNLKKSQKKGSDPLILISRTERSVNRDPNAYRYKWSKGSKNFQEHLEHFVSEQKSRFQVVFDRYRSIRNRYRSIRNRYRSRINQYSSDRSEVSDKKDNRYRSRINQYSSDRSEVSDQKNLAKFRSFVFSKLLLFLSNSLPFFFVSFGNTPPIQRSEIRVSELKGPNDRLCNQFLESIGLQLVYLKKLKPFLLDDHETSQKSKLLFNKKPEGMIDSFHTRNNRGKSLDSYFSMISHDQDNWLNPVKPFHRSSLISSFYKANRLRFLNNPHDFGFFCNKRFPFYVDIKNLDFTYGQFLNILFIRNTKFSLCGDKKKHAFLERDTISSIESQVSNLFKDFPQSGDERYNFYKYFHLAMRSDPLVRRAIYSIADISGTPLTEGQRVNFERTYCQPLSDMNLSDSEGKNLYQYLNFNSNMGLIYSEKCFSSEKRKKKKPEKRKEKKPEKRKEKKPEKRKEKKPEKRKEKKPEKRKEKKPEKRKEKKPEKRKEKKQSLYLKQWVEKVQMDRALQGERVSLILSNWNLFKTYVMPFSLTSTGYNLLKLMFLDTLGSYVMPLLRSSPKFVSICYAISDPCGISWRILQKKLCLLQWNWISAISNKCFHKLLLSEESIHRNNESPSMTDLRWPNLGAFLYSILFLLFVAGHLVFSHLLFLSQDFSELQRDFARAQSLMIPSYIVELRELLDMYPAPRSFKKLFLAAREKLVNYLRWGGGRKSFLIHLFELLNITPNPIDRIAFLKNTRHLSHTSKELYSLITELGDFSSLCSGQRYRYDQIIENVNGPCCLIDDKIESWISNCDAIEDKEREFLVPFCNFTRETRIDQILLSLTHSDHLSNNDSASQMSEEPGAFYLRHLVDIHKKGLMNYECNTSCLAERRIFLAHYQTITYSPCGDNRSHFPSHGKTFSLRLPLHPSRATLVIGSIGSGRSYLVKSLATNSYVPLITVVLNKFLKNWTPQGFDIHESGVYDEYGDDAEEANDYGASFFDFLDNDSDDYEDRDSDDYDEPGASDDYEPGDMEDFVDSEMTEWLTKTNVPLVYQLLDDEIDEFYITLQFELAKAMSPCILWIPNIHDLDAKESDYLSLGLLVNHLSRDCGRRSTKNEILVIASTHIPQKVDPSLIGPDGLSTCIKTRRLLVPQQQQCLFTLSYTRGFHLENKMFHTHTNEFESTILGPSVPDLVALTNEALSISITQKKSIIDTTTIRYALHRKTWDLEADRNLSPAKEHGTLFYQVGRAFAHTVLLRNCPIDPISIYIKKNLCEAGDSSLYKWYFELGTSMKKLTILLYLLTCSAGSIAQDLLSPPGPDEQNLITSYGLVENDSDLVHGLSDIVHGLLELEGALVGSSPTEEEVEGTEEEVEGTEEEVEGTEEEVEGTEEEVEGTEDEEVEGTEEEVEGTEDEEGEGTEEEVEGTEDEEGEGTEEEVEGTEDEEGEGTEEEVEGTEEEVEGTEEEVEGTEDEEGEGTEKDSSQFDNDRVTLLLRPKPRNPLDIQRLIYQHQKYESELEEDDDDDEDVFAPQKMLEDLFSELVWSPRIWHPWDFILDCEAEIPAEEIPEEEDPLPEEALETEVAVWGEEEEGEADDEEDERLEAQQEDELLEEEDEELKEEEDELHEEEEEEEEEEEEEEEDELHEEEEEEEEEDELQENDSEFFRSETQQPQARDGFSEEEGCFRISQFMWVPGDPLSFLYKDTPFVEVLSYPEEATEISKELLRLLNPKTKRDAPKRARQRWWTKKKQDKHYELVLDRQRWLITKSSLSKSNGFFRSNTPSESYQYLSNLFLSNRRLLDQITKTFFRKKWLFPDEMKIGFMEQ.

3 disordered regions span residues 168–189 (SSQL…GTED), 221–251 (TEIE…EMNN), and 947–1006 (KRKK…KRKE). The segment covering 230–240 (KGLSGSSSKSR) has biased composition (low complexity). Composition is skewed to basic and acidic residues over residues 241 to 250 (LFTEGEKEMN) and 955 to 1004 (KRKE…PEKR). 1436-1443 (GSIGSGRS) is a binding site for ATP. 3 disordered regions span residues 1510-1529 (YEDR…DYEP), 1855-1996 (LVGS…LLRP), and 2063-2179 (PAEE…DGFS). Acidic residues predominate over residues 1861–1976 (TEEEVEGTEE…VEGTEDEEGE (116 aa)). The segment covering 1977 to 1989 (GTEKDSSQFDNDR) has biased composition (basic and acidic residues). Composition is skewed to acidic residues over residues 2063-2080 (PAEE…EALE) and 2087-2162 (GEEE…ENDS).

It belongs to the Ycf2 family.

It is found in the plastid. The protein resides in the chloroplast stroma. Its function is as follows. Probable ATPase of unknown function. Its presence in a non-photosynthetic plant (Epifagus virginiana) and experiments in tobacco indicate that it has an essential function which is probably not related to photosynthesis. The sequence is that of Protein Ycf2 from Oenothera biennis (German evening primrose).